Consider the following 256-residue polypeptide: Pimeloyl-[acyl-carrier protein] methyl ester esterase (256 aa).

The region spanning 15–242 (HLVLLHGWGL…AAHAPFISHP (228 aa)) is the AB hydrolase-1 domain. Substrate is bound by residues W22, 82–83 (SL), and 143–147 (FLALQ). Catalysis depends on S82, which acts as the Nucleophile. Catalysis depends on residues D207 and H235. H235 provides a ligand contact to substrate.

The protein belongs to the AB hydrolase superfamily. Carboxylesterase BioH family. In terms of assembly, monomer.

It localises to the cytoplasm. It carries out the reaction 6-carboxyhexanoyl-[ACP] methyl ester + H2O = 6-carboxyhexanoyl-[ACP] + methanol + H(+). It functions in the pathway cofactor biosynthesis; biotin biosynthesis. The physiological role of BioH is to remove the methyl group introduced by BioC when the pimeloyl moiety is complete. It allows to synthesize pimeloyl-ACP via the fatty acid synthetic pathway through the hydrolysis of the ester bonds of pimeloyl-ACP esters. The sequence is that of Pimeloyl-[acyl-carrier protein] methyl ester esterase from Citrobacter koseri (strain ATCC BAA-895 / CDC 4225-83 / SGSC4696).